Reading from the N-terminus, the 194-residue chain is Lysozyme g-like protein 1 (194 aa).

An N-terminal signal peptide occupies residues 1 to 19 (MSALWLLLGLLALMDLSES). 2 cysteine pairs are disulfide-bonded: Cys24–Cys80 and Cys38–Cys49.

It belongs to the glycosyl hydrolase 23 family.

The protein localises to the secreted. In Homo sapiens (Human), this protein is Lysozyme g-like protein 1 (LYG1).